The sequence spans 83 residues: Putative defensin-like protein 111 (83 aa).

Positions 1–24 (MAITKKILLPFVLTILFVISSVHC) are cleaved as a signal peptide. Cystine bridges form between Cys40-Cys80, Cys46-Cys69, Cys54-Cys78, and Cys58-Cys79.

This sequence belongs to the DEFL family.

It is found in the secreted. This Arabidopsis thaliana (Mouse-ear cress) protein is Putative defensin-like protein 111 (LCR50).